We begin with the raw amino-acid sequence, 253 residues long: MPTSDSGEPRRIAMKPNGVTVPISDQQEQLPCPRCDSSNTKFCYYNNYNFSQPRHFCKACRRYWTHGGTLRDVPVGGGTRKSAKRSRTCSNSSSSSVSGVVSNSNGVPLQTTPVLFPQSSISNGVTHTVTESDGKGSALSLCGSFTSTLLNHNAAATATHGSGSVIGIGGFGIGLGSGFDDVSFGLGRAMWPFSTVGTATTTNVGSNGGHHAVPMPATWQFEGLESNAGGGFVSGEYFAWPDLSITTPGNSLK.

The Dof-type zinc-finger motif lies at leucine 30–lysine 84. Zn(2+)-binding residues include cysteine 32, cysteine 35, cysteine 57, and cysteine 60. Residues valine 73–asparagine 103 form a disordered region. Residues serine 90–asparagine 103 show a composition bias toward low complexity.

In terms of assembly, interacts with OBF4 or OBF5. As to expression, constitutively expressed in the whole plant.

The protein localises to the nucleus. Its function is as follows. Transcription factor that binds specifically to a 5'-AA[AG]G-3' consensus core sequence. Enhances the DNA binding of OBF transcription factors to OCS elements. The polypeptide is Dof zinc finger protein DOF3.4 (DOF3.4) (Arabidopsis thaliana (Mouse-ear cress)).